A 152-amino-acid polypeptide reads, in one-letter code: Transcriptional regulator MraZ (152 aa).

2 consecutive SpoVT-AbrB domains span residues 5 to 52 (ASAI…PLDE) and 81 to 124 (AHEC…DETA).

It belongs to the MraZ family. Forms oligomers.

It is found in the cytoplasm. It localises to the nucleoid. This Shewanella woodyi (strain ATCC 51908 / MS32) protein is Transcriptional regulator MraZ.